A 181-amino-acid chain; its full sequence is MSSLSVYHVSSPDIPNKVLTHLEDIASTLAEHGVAFDRWEAATPITPGASQEEVINAYRTQIDTLMTRHGYVTVDVISLNSDHPQKAELRARFLEEHRHGEDEVRFFVAGRGLFTLHIDDYVYAVLCEKNDLISVPAGTRHWFDMGENPHFVAIRLFNNPDGWVANFTGEDIAGRFPRLED.

Residues H97, H99, E103, and H141 each contribute to the Fe(2+) site. Positions 97, 99, 103, and 141 each coordinate Ni(2+).

Belongs to the acireductone dioxygenase (ARD) family. In terms of assembly, monomer. Fe(2+) is required as a cofactor. Ni(2+) serves as cofactor.

It catalyses the reaction 1,2-dihydroxy-5-(methylsulfanyl)pent-1-en-3-one + O2 = 3-(methylsulfanyl)propanoate + CO + formate + 2 H(+). The enzyme catalyses 1,2-dihydroxy-5-(methylsulfanyl)pent-1-en-3-one + O2 = 4-methylsulfanyl-2-oxobutanoate + formate + 2 H(+). It functions in the pathway amino-acid biosynthesis; L-methionine biosynthesis via salvage pathway; L-methionine from S-methyl-5-thio-alpha-D-ribose 1-phosphate: step 5/6. In terms of biological role, catalyzes 2 different reactions between oxygen and the acireductone 1,2-dihydroxy-3-keto-5-methylthiopentene (DHK-MTPene) depending upon the metal bound in the active site. Fe-containing acireductone dioxygenase (Fe-ARD) produces formate and 2-keto-4-methylthiobutyrate (KMTB), the alpha-ketoacid precursor of methionine in the methionine recycle pathway. Ni-containing acireductone dioxygenase (Ni-ARD) produces methylthiopropionate, carbon monoxide and formate, and does not lie on the methionine recycle pathway. This is Acireductone dioxygenase from Pseudomonas syringae pv. tomato (strain ATCC BAA-871 / DC3000).